The following is a 509-amino-acid chain: Ribonuclease Y (509 aa).

The chain crosses the membrane as a helical span at residues 3-23 (IIFSSIFAGFILGFLIRVFLG). Positions 197–257 (TVASVELPND…IRKELAKRTL (61 aa)) constitute a KH domain. Positions 323 to 418 (VLSHSKETAI…VQIADAISAS (96 aa)) constitute an HD domain.

This sequence belongs to the RNase Y family.

It is found in the cell membrane. Its function is as follows. Endoribonuclease that initiates mRNA decay. This Borreliella afzelii (strain PKo) (Borrelia afzelii) protein is Ribonuclease Y.